We begin with the raw amino-acid sequence, 82 residues long: uncharacterized protein (82 aa).

Its subcellular location is the plastid. It is found in the chloroplast. This is an uncharacterized protein from Vicia faba (Broad bean).